We begin with the raw amino-acid sequence, 614 residues long: Zinc metalloproteinase-disintegrin-like BmMP (614 aa).

An N-terminal signal peptide occupies residues 1–20 (MIQALLVTICLAVFPYQGSS). Positions 21-188 (IILESGNVND…WESDEPIRNA (168 aa)) are excised as a propeptide. Asparagine 187 is a glycosylation site (N-linked (GlcNAc...) asparagine). In terms of domain architecture, Peptidase M12B spans 205 to 401 (KYIEFYVAVD…DRPQCILNKP (197 aa)). 17 cysteine pairs are disulfide-bonded: cysteine 316–cysteine 396, cysteine 356–cysteine 380, cysteine 359–cysteine 364, cysteine 412–cysteine 441, cysteine 423–cysteine 436, cysteine 425–cysteine 431, cysteine 435–cysteine 458, cysteine 449–cysteine 455, cysteine 454–cysteine 480, cysteine 467–cysteine 487, cysteine 474–cysteine 506, cysteine 499–cysteine 511, cysteine 518–cysteine 568, cysteine 533–cysteine 576, cysteine 546–cysteine 556, cysteine 563–cysteine 602, and cysteine 596–cysteine 607. Histidine 341 contributes to the Zn(2+) binding site. Residue glutamate 342 is part of the active site. Residues histidine 345 and histidine 351 each coordinate Zn(2+). Residues 409–495 (PAICGNYFVE…ECPTDIFRRN (87 aa)) enclose the Disintegrin domain. The short motif at 473 to 475 (DCD) is the D/ECD-tripeptide element.

Belongs to the venom metalloproteinase (M12B) family. P-III subfamily. P-IIIa sub-subfamily. Monomer. Requires Zn(2+) as cofactor. In terms of tissue distribution, expressed by the venom gland.

The protein localises to the secreted. Functionally, snake venom zinc metalloproteinase that inhibits platelet aggregation and degrades fibrinogen. The polypeptide is Zinc metalloproteinase-disintegrin-like BmMP (Bungarus multicinctus (Many-banded krait)).